The sequence spans 78 residues: Delta-conotoxin-like S6.8 (78 aa).

An N-terminal signal peptide occupies residues 1–22; sequence MKLTCMMIVAVLFLTAWTFVTA. Positions 23–53 are excised as a propeptide; sequence DDSRNGLKNLFPKARHEMKNPDASKLNKRDG. Disulfide bonds link Cys54-Cys69, Cys61-Cys73, and Cys68-Cys77.

It belongs to the conotoxin O1 superfamily. As to expression, expressed by the venom duct.

Its subcellular location is the secreted. Functionally, delta-conotoxins bind to site 6 of voltage-gated sodium channels (Nav) and inhibit the inactivation process. This chain is Delta-conotoxin-like S6.8, found in Conus striatus (Striated cone).